Here is a 122-residue protein sequence, read N- to C-terminus: Large ribosomal subunit protein bL12 (122 aa).

It belongs to the bacterial ribosomal protein bL12 family. In terms of assembly, homodimer. Part of the ribosomal stalk of the 50S ribosomal subunit. Forms a multimeric L10(L12)X complex, where L10 forms an elongated spine to which 2 to 4 L12 dimers bind in a sequential fashion. Binds GTP-bound translation factors.

Functionally, forms part of the ribosomal stalk which helps the ribosome interact with GTP-bound translation factors. Is thus essential for accurate translation. The polypeptide is Large ribosomal subunit protein bL12 (Myxococcus xanthus (strain DK1622)).